The primary structure comprises 160 residues: tRNA (cytidine(34)-2'-O)-methyltransferase (160 aa).

Leucine 78, glycine 100, isoleucine 122, and serine 130 together coordinate S-adenosyl-L-methionine.

Belongs to the class IV-like SAM-binding methyltransferase superfamily. RNA methyltransferase TrmH family. TrmL subfamily. As to quaternary structure, homodimer.

It is found in the cytoplasm. It catalyses the reaction cytidine(34) in tRNA + S-adenosyl-L-methionine = 2'-O-methylcytidine(34) in tRNA + S-adenosyl-L-homocysteine + H(+). It carries out the reaction 5-carboxymethylaminomethyluridine(34) in tRNA(Leu) + S-adenosyl-L-methionine = 5-carboxymethylaminomethyl-2'-O-methyluridine(34) in tRNA(Leu) + S-adenosyl-L-homocysteine + H(+). Functionally, methylates the ribose at the nucleotide 34 wobble position in the two leucyl isoacceptors tRNA(Leu)(CmAA) and tRNA(Leu)(cmnm5UmAA). Catalyzes the methyl transfer from S-adenosyl-L-methionine to the 2'-OH of the wobble nucleotide. This Haemophilus influenzae (strain ATCC 51907 / DSM 11121 / KW20 / Rd) protein is tRNA (cytidine(34)-2'-O)-methyltransferase.